The following is a 268-amino-acid chain: uncharacterized protein (268 aa).

This is an uncharacterized protein from Schizosaccharomyces pombe (strain 972 / ATCC 24843) (Fission yeast).